The sequence spans 147 residues: MARPFPIQRTSIVREAGKKWFVVDASGKVLGRLASQIAKYLMGKNEPTFFPGVDNGNYVVVINADKVLLTGKKLDKKMYYHYSGYPGGLKQLTARQLLEKHPERLIYLAVKRMLPKAALGTKYLKRLKVYASDSHPHEAQKPQPLEF.

The protein belongs to the universal ribosomal protein uL13 family. In terms of assembly, part of the 50S ribosomal subunit.

This protein is one of the early assembly proteins of the 50S ribosomal subunit, although it is not seen to bind rRNA by itself. It is important during the early stages of 50S assembly. The chain is Large ribosomal subunit protein uL13 from Pseudothermotoga lettingae (strain ATCC BAA-301 / DSM 14385 / NBRC 107922 / TMO) (Thermotoga lettingae).